A 210-amino-acid polypeptide reads, in one-letter code: Chloramphenicol acetyltransferase (210 aa).

His79 is a catalytic residue.

Belongs to the transferase hexapeptide repeat family.

It carries out the reaction chloramphenicol + acetyl-CoA = chloramphenicol 3-acetate + CoA. In terms of biological role, this enzyme is an effector of chloramphenicol resistance in bacteria. This chain is Chloramphenicol acetyltransferase (catB4), found in Klebsiella aerogenes (Enterobacter aerogenes).